The chain runs to 31 residues: Cytochrome b6-f complex subunit 6 (31 aa).

Residues 3 to 23 (IITSYFGFLLTALTIASALFI) form a helical membrane-spanning segment.

Belongs to the PetL family. The 4 large subunits of the cytochrome b6-f complex are cytochrome b6, subunit IV (17 kDa polypeptide, PetD), cytochrome f and the Rieske protein, while the 4 small subunits are PetG, PetL, PetM and PetN. The complex functions as a dimer.

The protein resides in the plastid. Its subcellular location is the chloroplast thylakoid membrane. Functionally, component of the cytochrome b6-f complex, which mediates electron transfer between photosystem II (PSII) and photosystem I (PSI), cyclic electron flow around PSI, and state transitions. PetL is important for photoautotrophic growth as well as for electron transfer efficiency and stability of the cytochrome b6-f complex. The chain is Cytochrome b6-f complex subunit 6 from Helianthus annuus (Common sunflower).